The following is a 279-amino-acid chain: uncharacterized protein (279 aa).

The 87-residue stretch at 1–87 (MRVNGRNLTN…DEYIYLGRQI (87 aa)) folds into the Reverse transcriptase domain.

This is an uncharacterized protein from Caenorhabditis elegans.